A 429-amino-acid polypeptide reads, in one-letter code: UPF0761 membrane protein ABO_1543 (429 aa).

The next 6 helical transmembrane spans lie at 45–65, 102–122, 141–161, 184–204, 216–236, and 256–278; these read LFAI…VPAL, LTVL…STVE, LLMY…GLAI, WLAV…YTVV, LGAA…TFFI, and LLWI…ALVV.

It belongs to the UPF0761 family.

It localises to the cell inner membrane. The sequence is that of UPF0761 membrane protein ABO_1543 from Alcanivorax borkumensis (strain ATCC 700651 / DSM 11573 / NCIMB 13689 / SK2).